The following is a 468-amino-acid chain: ATP synthase subunit beta (468 aa).

Position 155 to 162 (155 to 162 (GGAGVGKT)) interacts with ATP.

It belongs to the ATPase alpha/beta chains family. As to quaternary structure, F-type ATPases have 2 components, CF(1) - the catalytic core - and CF(0) - the membrane proton channel. CF(1) has five subunits: alpha(3), beta(3), gamma(1), delta(1), epsilon(1). CF(0) has three main subunits: a(1), b(2) and c(9-12). The alpha and beta chains form an alternating ring which encloses part of the gamma chain. CF(1) is attached to CF(0) by a central stalk formed by the gamma and epsilon chains, while a peripheral stalk is formed by the delta and b chains.

It localises to the cell membrane. The enzyme catalyses ATP + H2O + 4 H(+)(in) = ADP + phosphate + 5 H(+)(out). Produces ATP from ADP in the presence of a proton gradient across the membrane. The catalytic sites are hosted primarily by the beta subunits. In Bacillus cereus (strain ATCC 10987 / NRS 248), this protein is ATP synthase subunit beta.